Consider the following 1275-residue polypeptide: O-antigen biosynthesis protein RfbC (1275 aa).

In terms of biological role, involved in O-antigen biosynthesis. The sequence is that of O-antigen biosynthesis protein RfbC (rfbC) from Myxococcus xanthus.